Here is a 282-residue protein sequence, read N- to C-terminus: Undecaprenyl-diphosphatase (282 aa).

The next 7 membrane-spanning stretches (helical) occupy residues 40–60, 89–109, 113–133, 150–170, 196–216, 230–250, and 258–278; these read GAAF…IYFM, WMIA…KDDI, LRSL…LSIA, ISEI…MALI, FSFL…LYKT, IAVA…FLLT, and GIFI…IGTG.

This sequence belongs to the UppP family.

It localises to the cell inner membrane. The enzyme catalyses di-trans,octa-cis-undecaprenyl diphosphate + H2O = di-trans,octa-cis-undecaprenyl phosphate + phosphate + H(+). Functionally, catalyzes the dephosphorylation of undecaprenyl diphosphate (UPP). Confers resistance to bacitracin. The sequence is that of Undecaprenyl-diphosphatase from Chlorobaculum parvum (strain DSM 263 / NCIMB 8327) (Chlorobium vibrioforme subsp. thiosulfatophilum).